The primary structure comprises 64 residues: Prokaryotic ubiquitin-like protein UBact (64 aa).

2 stretches are compositionally biased toward basic and acidic residues: residues 1–12 (MSDLFRMEERRQ) and 33–64 (PDVK…RSGE). The tract at residues 1–64 (MSDLFRMEER…ARRYRQRSGE (64 aa)) is disordered. Glu-64 is covalently cross-linked (Isoglutamyl lysine isopeptide (Glu-Lys) (interchain with K-? in acceptor proteins)).

This sequence belongs to the ubiquitin-like protein UBact family.

Its function is as follows. May function as a protein modifier covalently attached to lysine residues of substrate proteins. This may serve to target the modified proteins for degradation by proteasomes. This Chthonomonas calidirosea (strain DSM 23976 / ICMP 18418 / T49) protein is Prokaryotic ubiquitin-like protein UBact.